Here is a 588-residue protein sequence, read N- to C-terminus: Adenine deaminase (588 aa).

Belongs to the metallo-dependent hydrolases superfamily. Adenine deaminase family. As to quaternary structure, homodimer. Requires Mn(2+) as cofactor.

The enzyme catalyses adenine + H2O + H(+) = hypoxanthine + NH4(+). The sequence is that of Adenine deaminase from Escherichia coli O7:K1 (strain IAI39 / ExPEC).